We begin with the raw amino-acid sequence, 376 residues long: Beta-centractin (376 aa).

M1 carries the post-translational modification N-acetylmethionine. 3'-nitrotyrosine is present on Y4.

The protein belongs to the actin family. ARP1 subfamily.

It localises to the cytoplasm. The protein resides in the cytoskeleton. Its subcellular location is the microtubule organizing center. The protein localises to the centrosome. Functionally, component of a multi-subunit complex involved in microtubule based vesicle motility. It is associated with the centrosome. This is Beta-centractin (Actr1b) from Mus musculus (Mouse).